The following is a 389-amino-acid chain: MPIRDWRQQSQRWPIDYWLIGALAILITLGLTMVASSSIAISEKRFGDPTHYLLRQMFSMGLGLMAAYIVLKIPLSFWRKHRGQLFIVGLVLLVLVLVFGREINGSKRWLPLVLMNFQVSEFMKIAVVVFMAGYLDRHATAVRESFEAVIRLALPFGVMAILLLLEPDFGSTFVIAVIITGMLLIAGAPWRFFVMTVLPIATLLVMMVITSPYRMARVTNFLDPWSDPFGNGYQLTQALIASGRGEWFGVGIGESVQKLLYLPDAHTDFLFSIYAEEYGLIGVAFLALLYLTLLYRCFRIGRKAFNQTHYFGGLIAYGVGIWIVLQAMINMGVNLGLFPTKGLTLPFMSYGGSSVLMLFIGVAMVLRVDLETRQAVLEHSVDESGQGKR.

Over 1–14 the chain is Cytoplasmic; it reads MPIRDWRQQSQRWP. The helical transmembrane segment at 15-35 threads the bilayer; it reads IDYWLIGALAILITLGLTMVA. The Periplasmic portion of the chain corresponds to 36 to 57; it reads SSSIAISEKRFGDPTHYLLRQM. The chain crosses the membrane as a helical span at residues 58–78; the sequence is FSMGLGLMAAYIVLKIPLSFW. The Cytoplasmic portion of the chain corresponds to 79–84; the sequence is RKHRGQ. A helical transmembrane segment spans residues 85 to 105; that stretch reads LFIVGLVLLVLVLVFGREING. Residues 106–111 are Periplasmic-facing; that stretch reads SKRWLP. Residues 112–132 traverse the membrane as a helical segment; that stretch reads LVLMNFQVSEFMKIAVVVFMA. Topologically, residues 133-144 are cytoplasmic; that stretch reads GYLDRHATAVRE. The helical transmembrane segment at 145–165 threads the bilayer; it reads SFEAVIRLALPFGVMAILLLL. Residues 166–168 are Periplasmic-facing; the sequence is EPD. The helical transmembrane segment at 169–189 threads the bilayer; it reads FGSTFVIAVIITGMLLIAGAP. Over 190 to 191 the chain is Cytoplasmic; that stretch reads WR. Residues 192–212 traverse the membrane as a helical segment; the sequence is FFVMTVLPIATLLVMMVITSP. Over 213 to 268 the chain is Periplasmic; the sequence is YRMARVTNFLDPWSDPFGNGYQLTQALIASGRGEWFGVGIGESVQKLLYLPDAHTD. The helical transmembrane segment at 269 to 289 threads the bilayer; it reads FLFSIYAEEYGLIGVAFLALL. Residues 290-310 are Cytoplasmic-facing; the sequence is YLTLLYRCFRIGRKAFNQTHY. A helical membrane pass occupies residues 311–331; sequence FGGLIAYGVGIWIVLQAMINM. Topologically, residues 332 to 344 are periplasmic; sequence GVNLGLFPTKGLT. The chain crosses the membrane as a helical span at residues 345–365; the sequence is LPFMSYGGSSVLMLFIGVAMV. Residues 366–389 lie on the Cytoplasmic side of the membrane; it reads LRVDLETRQAVLEHSVDESGQGKR.

It belongs to the SEDS family. FtsW subfamily.

The protein localises to the cell inner membrane. It catalyses the reaction [GlcNAc-(1-&gt;4)-Mur2Ac(oyl-L-Ala-gamma-D-Glu-L-Lys-D-Ala-D-Ala)](n)-di-trans,octa-cis-undecaprenyl diphosphate + beta-D-GlcNAc-(1-&gt;4)-Mur2Ac(oyl-L-Ala-gamma-D-Glu-L-Lys-D-Ala-D-Ala)-di-trans,octa-cis-undecaprenyl diphosphate = [GlcNAc-(1-&gt;4)-Mur2Ac(oyl-L-Ala-gamma-D-Glu-L-Lys-D-Ala-D-Ala)](n+1)-di-trans,octa-cis-undecaprenyl diphosphate + di-trans,octa-cis-undecaprenyl diphosphate + H(+). It functions in the pathway cell wall biogenesis; peptidoglycan biosynthesis. Functionally, peptidoglycan polymerase that is essential for cell division. The chain is Probable peptidoglycan glycosyltransferase FtsW from Hydrogenovibrio crunogenus (strain DSM 25203 / XCL-2) (Thiomicrospira crunogena).